We begin with the raw amino-acid sequence, 128 residues long: MFIEVLKSKIHRATVTEANLNYVGSITIDEELMKAAGIYENEKVQVVNINNGERFETYVIKGEKGSGTICLNGAAARLVQVGDKIIIMAYCLLTMEEYYNHKPRIVFVDDENKIVRLSDKEEHSECIC.

Ser25 acts as the Schiff-base intermediate with substrate; via pyruvic acid in catalysis. Ser25 bears the Pyruvic acid (Ser) mark. Thr57 provides a ligand contact to substrate. Tyr58 functions as the Proton donor in the catalytic mechanism. 73–75 lines the substrate pocket; that stretch reads GAA.

Belongs to the PanD family. As to quaternary structure, heterooctamer of four alpha and four beta subunits. Pyruvate is required as a cofactor. In terms of processing, is synthesized initially as an inactive proenzyme, which is activated by self-cleavage at a specific serine bond to produce a beta-subunit with a hydroxyl group at its C-terminus and an alpha-subunit with a pyruvoyl group at its N-terminus.

It is found in the cytoplasm. The enzyme catalyses L-aspartate + H(+) = beta-alanine + CO2. The protein operates within cofactor biosynthesis; (R)-pantothenate biosynthesis; beta-alanine from L-aspartate: step 1/1. Functionally, catalyzes the pyruvoyl-dependent decarboxylation of aspartate to produce beta-alanine. This chain is Aspartate 1-decarboxylase, found in Caldicellulosiruptor bescii (strain ATCC BAA-1888 / DSM 6725 / KCTC 15123 / Z-1320) (Anaerocellum thermophilum).